Here is a 199-residue protein sequence, read N- to C-terminus: Recombination protein RecR (199 aa).

Residues 58-73 form a C4-type zinc finger; the sequence is CSVCYGLADSDPCHIC. Residues 81–176 enclose the Toprim domain; the sequence is DVVCVVEQGT…KITRIASGVP (96 aa).

This sequence belongs to the RecR family.

May play a role in DNA repair. It seems to be involved in an RecBC-independent recombinational process of DNA repair. It may act with RecF and RecO. This Desulfatibacillum aliphaticivorans protein is Recombination protein RecR.